The sequence spans 174 residues: Large ribosomal subunit protein bL12cy (174 aa).

The transit peptide at 1–45 directs the protein to the chloroplast; sequence MASTTFSSAFSILSLPSSSPSPPPWAPRTLPVANRRRRAAAVAST.

The protein belongs to the bacterial ribosomal protein bL12 family.

The protein resides in the plastid. It localises to the chloroplast. The protein is Large ribosomal subunit protein bL12cy (RPL12-2) of Secale cereale (Rye).